A 447-amino-acid chain; its full sequence is N-succinylarginine dihydrolase (447 aa).

Residues 19–28 (AGLSFGNEAS), Asn110, and 137–138 (HR) contribute to the substrate site. Glu174 is an active-site residue. Arg213 is a substrate binding site. Residue His249 is part of the active site. 2 residues coordinate substrate: Asp251 and Asn364. The active-site Nucleophile is Cys370.

The protein belongs to the succinylarginine dihydrolase family. As to quaternary structure, homodimer.

It catalyses the reaction N(2)-succinyl-L-arginine + 2 H2O + 2 H(+) = N(2)-succinyl-L-ornithine + 2 NH4(+) + CO2. It functions in the pathway amino-acid degradation; L-arginine degradation via AST pathway; L-glutamate and succinate from L-arginine: step 2/5. Catalyzes the hydrolysis of N(2)-succinylarginine into N(2)-succinylornithine, ammonia and CO(2). The sequence is that of N-succinylarginine dihydrolase from Yersinia enterocolitica serotype O:8 / biotype 1B (strain NCTC 13174 / 8081).